Here is a 259-residue protein sequence, read N- to C-terminus: Dysbindin domain-containing protein 2 (259 aa).

Disordered stretches follow at residues 27–56 (SCER…PVSR) and 174–259 (ADVF…GACS). Over residues 32–46 (SPPPPLPHFRLPPLP) the composition is skewed to pro residues. Residues 205-223 (TSDRTTSRTSSSSSSDSST) show a composition bias toward low complexity. A phosphoserine mark is found at serine 217 and serine 218. Threonine 237 is subject to Phosphothreonine. Serine 242 bears the Phosphoserine mark.

It belongs to the dysbindin family. As to quaternary structure, monomer. Interacts with CSNK1D and CSNK1E. As to expression, detected in brain.

In terms of biological role, may modulate the activity of casein kinase-1. Inhibits CSNK1D autophosphorylation (in vitro). This Homo sapiens (Human) protein is Dysbindin domain-containing protein 2 (DBNDD2).